Here is a 498-residue protein sequence, read N- to C-terminus: 3-octaprenyl-4-hydroxybenzoate carboxy-lyase (498 aa).

Asn-175 provides a ligand contact to Mn(2+). Residues 178-180 (IYR), 192-194 (RWL), and 197-198 (RG) each bind prenylated FMN. A Mn(2+)-binding site is contributed by Glu-241. Asp-290 serves as the catalytic Proton donor.

Belongs to the UbiD family. Homohexamer. Requires prenylated FMN as cofactor. The cofactor is Mn(2+).

Its subcellular location is the cell membrane. It catalyses the reaction a 4-hydroxy-3-(all-trans-polyprenyl)benzoate + H(+) = a 2-(all-trans-polyprenyl)phenol + CO2. It functions in the pathway cofactor biosynthesis; ubiquinone biosynthesis. Functionally, catalyzes the decarboxylation of 3-octaprenyl-4-hydroxy benzoate to 2-octaprenylphenol, an intermediate step in ubiquinone biosynthesis. The protein is 3-octaprenyl-4-hydroxybenzoate carboxy-lyase of Yersinia pestis bv. Antiqua (strain Antiqua).